Here is a 442-residue protein sequence, read N- to C-terminus: D-serine dehydratase (442 aa).

Position 118 is an N6-(pyridoxal phosphate)lysine (K118).

This sequence belongs to the serine/threonine dehydratase family. DsdA subfamily. In terms of assembly, monomer. The cofactor is pyridoxal 5'-phosphate.

The catalysed reaction is D-serine = pyruvate + NH4(+). This chain is D-serine dehydratase, found in Escherichia coli O157:H7.